Consider the following 393-residue polypeptide: DNA primase large subunit PriL (393 aa).

Residues Cys-230, Cys-339, Cys-350, and Cys-356 each coordinate [4Fe-4S] cluster.

Belongs to the eukaryotic-type primase large subunit family. In terms of assembly, heterodimer of a small subunit (PriS) and a large subunit (PriL). [4Fe-4S] cluster serves as cofactor.

Regulatory subunit of DNA primase, an RNA polymerase that catalyzes the synthesis of short RNA molecules used as primers for DNA polymerase during DNA replication. Stabilizes and modulates the activity of the small subunit, increasing the rate of DNA synthesis, and conferring RNA synthesis capability. The DNA polymerase activity may enable DNA primase to also catalyze primer extension after primer synthesis. May also play a role in DNA repair. Displays gap-filling and strand-displacement activities. The polypeptide is DNA primase large subunit PriL (Pyrococcus abyssi (strain GE5 / Orsay)).